A 317-amino-acid chain; its full sequence is Melanocyte-stimulating hormone receptor (317 aa).

Positions 1-28 (MPMQGAQGRLRGSLNATPPTTPHSGLAG) are disordered. Topologically, residues 1-37 (MPMQGAQGRLRGSLNATPPTTPHSGLAGNQTGPWCLE) are extracellular. Asparagine 29 carries an N-linked (GlcNAc...) asparagine glycan. The chain crosses the membrane as a helical span at residues 38-63 (VSIPDELFLSLGLVSLVENMLVVAAI). The Cytoplasmic segment spans residues 64-72 (AKNRNLHSP). The chain crosses the membrane as a helical span at residues 73-93 (MYYFICCLAVSDLLVSVSNVL). At 94–118 (ETAVMLLLEAGVLAAWAGVVQQLDN) the chain is on the extracellular side. A helical transmembrane segment spans residues 119–140 (AIDVFICGSMVSSLCFLGAIAV). Topologically, residues 141–163 (DRYITIFYALRYHSIVTLPRARW) are cytoplasmic. Residues 164–183 (AIATIWAASVVCSTLFIAYY) traverse the membrane as a helical segment. The Extracellular segment spans residues 184–191 (DCTAVLLC). A helical transmembrane segment spans residues 192 to 211 (LVSFFLALVVLMAVLYMHML). At 212–240 (ARACLHARSIARLHKRWRPVHQGLGLKGA) the chain is on the cytoplasmic side. A helical membrane pass occupies residues 241–266 (ATLSILLGSFFLCWGPFFLHLTLIVL). Residues 267–279 (CPQHPTCSCVFKN) lie on the Extracellular side of the membrane. The chain crosses the membrane as a helical span at residues 280 to 300 (FKLFLTLIICNSIVDPLIYAF). The Cytoplasmic segment spans residues 301 to 317 (RSQELRKTLKEVLLCSW). Cysteine 315 is lipidated: S-palmitoyl cysteine.

Belongs to the G-protein coupled receptor 1 family. Interacts with MGRN1, but does not undergo MGRN1-mediated ubiquitination; this interaction competes with GNAS-binding and thus inhibits agonist-induced cAMP production. Interacts with OPN3; the interaction results in a decrease in MC1R-mediated cAMP signaling and ultimately a decrease in melanin production in melanocytes.

Its subcellular location is the cell membrane. Its function is as follows. Receptor for MSH (alpha, beta and gamma) and ACTH. The activity of this receptor is mediated by G proteins which activate adenylate cyclase. Mediates melanogenesis, the production of eumelanin (black/brown) and phaeomelanin (red/yellow), via regulation of cAMP signaling in melanocytes. The sequence is that of Melanocyte-stimulating hormone receptor (MC1R) from Mammuthus primigenius (Siberian woolly mammoth).